Here is a 180-residue protein sequence, read N- to C-terminus: NAD(P)H-quinone oxidoreductase subunit I, chloroplastic (180 aa).

4Fe-4S ferredoxin-type domains lie at 55–84 (GRIHFEFDKCIACEVCVRVCPIDLPVVDWR) and 95–124 (LNYSIDFGICIFCGNCVEYCPTNCLSMTEE). Positions 64, 67, 70, 74, 104, 107, 110, and 114 each coordinate [4Fe-4S] cluster.

It belongs to the complex I 23 kDa subunit family. As to quaternary structure, NDH is composed of at least 16 different subunits, 5 of which are encoded in the nucleus. [4Fe-4S] cluster serves as cofactor.

It is found in the plastid. The protein localises to the chloroplast thylakoid membrane. The catalysed reaction is a plastoquinone + NADH + (n+1) H(+)(in) = a plastoquinol + NAD(+) + n H(+)(out). The enzyme catalyses a plastoquinone + NADPH + (n+1) H(+)(in) = a plastoquinol + NADP(+) + n H(+)(out). In terms of biological role, NDH shuttles electrons from NAD(P)H:plastoquinone, via FMN and iron-sulfur (Fe-S) centers, to quinones in the photosynthetic chain and possibly in a chloroplast respiratory chain. The immediate electron acceptor for the enzyme in this species is believed to be plastoquinone. Couples the redox reaction to proton translocation, and thus conserves the redox energy in a proton gradient. This Illicium oligandrum (Star anise) protein is NAD(P)H-quinone oxidoreductase subunit I, chloroplastic.